A 187-amino-acid polypeptide reads, in one-letter code: MSPWIKHICLVLVAAFMLVKTTESKKDEALYCSACMAIADEINYSISQTDPKKMIHVGGFRLKPDGSLTDKKVPLARSETYLTELLEEVCKSMSDYALYENPDTKEKSYKRFAPRDNDGGNFPDFKNFKFDGPESSSALKFACESIVEELEDDIISLFASDSDHVAKTLCSEVSDHCKSSVFQHSEL.

Residues 1 to 24 form the signal peptide; that stretch reads MSPWIKHICLVLVAAFMLVKTTES. The 154-residue stretch at 28–181 folds into the Saposin B-type domain; the sequence is EALYCSACMA…EVSDHCKSSV (154 aa). Cystine bridges form between C32–C177, C35–C170, and C90–C143. Residues 184–187 carry the Prevents secretion from ER motif; the sequence is HSEL.

This sequence belongs to the canopy family. As to quaternary structure, homodimer. Interacts with fgfr1.

The protein localises to the endoplasmic reticulum. In terms of biological role, involved in the maintenance of the midbrain-hindbrain boundary (MHB) organizer. Contributes to a positive-feedback loop of FGF signaling in the MHB, enabling the MHB to exert its role as an organizer for the tectal and cerebellar development. The polypeptide is Protein canopy-1 (cnpy1) (Danio rerio (Zebrafish)).